A 352-amino-acid chain; its full sequence is Rhodopsin (352 aa).

At 1–36 (MNGTEGPYFYVPMSNATGVVRSPYEYPQYYLAPPWA) the chain is on the extracellular side. Residues Asn-2 and Asn-15 are each glycosylated (N-linked (GlcNAc...) asparagine). Residues 37 to 61 (YACLAAYMFFLILVGFPVNFLTLYV) traverse the membrane as a helical segment. The Cytoplasmic portion of the chain corresponds to 62–73 (TIEHKKLRTPLN). Residues 74–96 (YILLNLAVADLFMVFGGFTTTMY) traverse the membrane as a helical segment. Over 97-110 (TSLNGYFVFGRLGC) the chain is Extracellular. Cys-110 and Cys-187 are disulfide-bonded. The helical transmembrane segment at 111-133 (NLEGFFATFGGINSLWCLVVLSI) threads the bilayer. Residues 134–136 (ERW) carry the 'Ionic lock' involved in activated form stabilization motif. Residues 134–152 (ERWVVVCKPMSNFRFGENH) lie on the Cytoplasmic side of the membrane. A helical transmembrane segment spans residues 153-173 (AIMGVAFTWFMALACTVPPLV). Residues 174-202 (GWSRYIPEGMQCSCGIDYYTRAEGFNNES) lie on the Extracellular side of the membrane. The chain crosses the membrane as a helical span at residues 203–224 (FVIYMFVVHFLTPLFVITFCYG). At 225–252 (RLVCTVKEAAAQQQESETTQRAEREVTR) the chain is on the cytoplasmic side. The chain crosses the membrane as a helical span at residues 253-274 (MVILMFIAYLVCWLPYASVSWW). Topologically, residues 275–286 (IFTNQGSEFGPI) are extracellular. A helical membrane pass occupies residues 287-308 (FMTVPAFFAKSSSIYNPVIYIC). Lys-296 is modified (N6-(retinylidene)lysine). Residues 309 to 352 (LNKQFRHCMITTLCCGKNPFEEEEGASTTASKTEASSVSSVSPA) are Cytoplasmic-facing. Residues Cys-322 and Cys-323 are each lipidated (S-palmitoyl cysteine). Positions 331–352 (EEGASTTASKTEASSVSSVSPA) are disordered. Residues 334 to 352 (ASTTASKTEASSVSSVSPA) show a composition bias toward low complexity.

It belongs to the G-protein coupled receptor 1 family. Opsin subfamily. In terms of processing, phosphorylated on some or all of the serine and threonine residues present in the C-terminal region. Post-translationally, contains one covalently linked retinal chromophore.

Its subcellular location is the membrane. It is found in the cell projection. It localises to the cilium. The protein localises to the photoreceptor outer segment. Photoreceptor required for image-forming vision at low light intensity. While most salt water fish species use retinal as chromophore, most freshwater fish use 3-dehydroretinal, or a mixture of retinal and 3-dehydroretinal. Light-induced isomerization of 11-cis to all-trans retinal triggers a conformational change that activates signaling via G-proteins. Subsequent receptor phosphorylation mediates displacement of the bound G-protein alpha subunit by arrestin and terminates signaling. The sequence is that of Rhodopsin (rho) from Psalidodon fasciatus (Banded astyanax).